The sequence spans 290 residues: Light-independent protochlorophyllide reductase iron-sulfur ATP-binding protein (290 aa).

ATP contacts are provided by residues 10–15 (GIGKST) and K39. S14 contacts Mg(2+). Positions 95 and 129 each coordinate [4Fe-4S] cluster. 180–181 (NR) is a binding site for ATP.

This sequence belongs to the NifH/BchL/ChlL family. Homodimer. Protochlorophyllide reductase is composed of three subunits; ChlL, ChlN and ChlB. [4Fe-4S] cluster serves as cofactor.

Its subcellular location is the plastid. It is found in the chloroplast. The catalysed reaction is chlorophyllide a + oxidized 2[4Fe-4S]-[ferredoxin] + 2 ADP + 2 phosphate = protochlorophyllide a + reduced 2[4Fe-4S]-[ferredoxin] + 2 ATP + 2 H2O. Its pathway is porphyrin-containing compound metabolism; chlorophyll biosynthesis (light-independent). Functionally, component of the dark-operative protochlorophyllide reductase (DPOR) that uses Mg-ATP and reduced ferredoxin to reduce ring D of protochlorophyllide (Pchlide) to form chlorophyllide a (Chlide). This reaction is light-independent. The L component serves as a unique electron donor to the NB-component of the complex, and binds Mg-ATP. The chain is Light-independent protochlorophyllide reductase iron-sulfur ATP-binding protein from Chaetosphaeridium globosum (Charophycean green alga).